The sequence spans 277 residues: Lectin 1 (277 aa).

Positions 1–30 (MSFSSSNFYVILSISLTVFILLFNINKVNS) are cleaved as a signal peptide. N-linked (GlcNAc...) asparagine glycosylation is present at Asn-143. Mn(2+) contacts are provided by Glu-152 and Asp-154. Asp-154, Asn-158, and Asp-161 together coordinate Ca(2+). Positions 161 and 167 each coordinate Mn(2+). Residue Asn-269 is glycosylated (N-linked (GlcNAc...) asparagine).

It belongs to the leguminous lectin family.

In terms of biological role, lectin that may be involved in a cell recognition process. The polypeptide is Lectin 1 (LEC1) (Medicago truncatula (Barrel medic)).